The primary structure comprises 150 residues: Large ribosomal subunit protein bL9 (150 aa).

This sequence belongs to the bacterial ribosomal protein bL9 family.

Binds to the 23S rRNA. The polypeptide is Large ribosomal subunit protein bL9 (Shewanella sp. (strain MR-4)).